We begin with the raw amino-acid sequence, 190 residues long: Selenoprotein S (190 aa).

The helical transmembrane segment at 28–48 (SLLASYGWYILFSCILLYIVI) threads the bilayer. The VCP/p97-interacting motif (VIM) stretch occupies residues 78–90 (RQEALAAARLRMQ). The tract at residues 115–190 (KIEMWDSMQE…RRGPSSGGUN (76 aa)) is disordered. A compositionally biased stretch (gly residues) spans 160 to 174 (RGGGYNPLTGEGGGT). Position 189 (U189) is a non-standard amino acid, selenocysteine.

The protein belongs to the selenoprotein S family. Interacts with DERL1 and (via VIM motif) with VCP, suggesting that it forms a membrane complex with DERL1 that serves as a receptor for VCP. Also interacts with DERL2, DERL3 and SELENOK. The SELENOK-SELENOS complex interacts with VCP. Interacts with CCDC47. Truncated SELENOS proteins produced by failed UGA/Sec decoding are ubiquitinated by the CRL2(KLHDC2) and CRL2(KLHDC3) complexes, which recognizes the glycine (Gly) at the C-terminus of truncated SELENOS proteins. Truncated SELENOS proteins produced by failed UGA/Sec decoding are also ubiquitinated by the CRL5(KLHDC1) complex.

The protein resides in the endoplasmic reticulum membrane. It localises to the cytoplasm. Functionally, involved in the degradation process of misfolded endoplasmic reticulum (ER) luminal proteins. Participates in the transfer of misfolded proteins from the ER to the cytosol, where they are destroyed by the proteasome in a ubiquitin-dependent manner. Probably acts by serving as a linker between DERL1, which mediates the retrotranslocation of misfolded proteins into the cytosol, and the ATPase complex VCP, which mediates the translocation and ubiquitination. The polypeptide is Selenoprotein S (Mus musculus (Mouse)).